Here is a 453-residue protein sequence, read N- to C-terminus: Glutamyl-tRNA(Gln) amidotransferase subunit A (453 aa).

Active-site charge relay system residues include Lys56 and Ser131. The active-site Acyl-ester intermediate is the Ser155.

This sequence belongs to the amidase family. GatA subfamily. As to quaternary structure, heterotrimer of A, B and C subunits.

The enzyme catalyses L-glutamyl-tRNA(Gln) + L-glutamine + ATP + H2O = L-glutaminyl-tRNA(Gln) + L-glutamate + ADP + phosphate + H(+). Functionally, allows the formation of correctly charged Gln-tRNA(Gln) through the transamidation of misacylated Glu-tRNA(Gln) in organisms which lack glutaminyl-tRNA synthetase. The reaction takes place in the presence of glutamine and ATP through an activated gamma-phospho-Glu-tRNA(Gln). The sequence is that of Glutamyl-tRNA(Gln) amidotransferase subunit A from Campylobacter jejuni subsp. jejuni serotype O:6 (strain 81116 / NCTC 11828).